The primary structure comprises 184 residues: uncharacterized protein (184 aa).

The first 23 residues, methionine 1–alanine 23, serve as a signal peptide directing secretion.

The protein localises to the secreted. This is an uncharacterized protein from Homo sapiens (Human).